The primary structure comprises 376 residues: Cyclic GMP-AMP synthase-like receptor 1 (376 aa).

The Mg(2+) site is built by Glu-77 and Asp-79.

This sequence belongs to the mab-21 family. The cofactor is Mg(2+). Mn(2+) serves as cofactor.

The enzyme catalyses UTP + ATP = 3',3'-cUAMP + 2 diphosphate. Its function is as follows. Nucleotidyltransferase that catalyzes the formation of cyclic UMP-AMP (3',3'-cUAMP) from ATP and UTP and plays a key role in innate immunity. Acts as a key sensor of double-stranded RNA (dsRNA), the presence of dsRNA in the cytoplasm being a danger signal that triggers the immune responses. Directly binds dsRNA, activating the nucleotidyltransferase activity, leading to synthesis of 3',3'-cUAMP, a second messenger that binds to and activates Sting, thereby triggering the immune response via activation of the NF-kappa-B transcription factor. The chain is Cyclic GMP-AMP synthase-like receptor 1 from Stylophora pistillata (Smooth cauliflower coral).